Reading from the N-terminus, the 277-residue chain is Myelin proteolipid protein (277 aa).

Residues 1–10 lie on the Cytoplasmic side of the membrane; the sequence is MGLLECCARC. 3 S-palmitoyl cysteine lipidation sites follow: cysteine 6, cysteine 7, and cysteine 10. The chain crosses the membrane as a helical span at residues 11-36; it reads LVGAPFASLVATGLCFFGVALFCGCG. The Extracellular portion of the chain corresponds to 37 to 59; the sequence is HEALTGTEKLIETYFSKNYQDYE. A helical transmembrane segment spans residues 60 to 88; it reads YLINVIHAFQYVIYGTASFFFLYGALLLA. At 89–151 the chain is on the cytoplasmic side; sequence EGFYTTGAVR…LGKWLGHPDK (63 aa). Cysteine 109 is lipidated: S-palmitoyl cysteine. Serine 114 is subject to Phosphoserine. A phosphothreonine mark is found at threonine 116 and threonine 118. 2 S-palmitoyl cysteine lipidation sites follow: cysteine 139 and cysteine 141. The chain crosses the membrane as a helical span at residues 152 to 178; that stretch reads FVGITYALTIVWLLVFACSAVPVYIYF. Topologically, residues 179-238 are extracellular; sequence NTWTTCQSIAFPSKTSASIGSLCADARMYGVLPWNAFPGKVCGSNLLSICKTAEFQMTFH. Cystine bridges form between cysteine 184–cysteine 228 and cysteine 201–cysteine 220. Serine 199 carries O-palmitoyl serine lipidation. A helical membrane pass occupies residues 239–268; that stretch reads LFIAAFVGAAATLVSLLTFMIAATYNFAVL. Over 269-277 the chain is Cytoplasmic; the sequence is KLMGRGTKF.

Belongs to the myelin proteolipid protein family.

Its subcellular location is the cell membrane. It is found in the myelin membrane. Functionally, this is the major myelin protein from the central nervous system. It plays an important role in the formation or maintenance of the multilamellar structure of myelin. The protein is Myelin proteolipid protein (PLP1) of Canis lupus familiaris (Dog).